We begin with the raw amino-acid sequence, 287 residues long: Orotidine 5'-phosphate decarboxylase (287 aa).

The active-site Proton donor is K97.

The protein belongs to the OMP decarboxylase family. Type 2 subfamily.

It catalyses the reaction orotidine 5'-phosphate + H(+) = UMP + CO2. It functions in the pathway pyrimidine metabolism; UMP biosynthesis via de novo pathway; UMP from orotate: step 2/2. This chain is Orotidine 5'-phosphate decarboxylase (pyrF), found in Clostridium perfringens (strain 13 / Type A).